A 214-amino-acid polypeptide reads, in one-letter code: Adenylate kinase (214 aa).

10–15 (GAGKGT) is an ATP binding site. The NMP stretch occupies residues 30 to 59 (STGDMLRAAVKAGTPLGLEAKKVMDAGQLV). AMP is bound by residues Thr-31, Arg-36, 57 to 59 (QLV), 85 to 88 (GFPR), and Gln-92. An LID region spans residues 122 to 159 (GRRVHPGSGRVYHVVFNPPKVEGKDDVTGEDLAIRPDD). ATP contacts are provided by residues Arg-123 and 132 to 133 (VY). AMP is bound by residues Arg-156 and Arg-167. Residue Gln-200 coordinates ATP.

It belongs to the adenylate kinase family. As to quaternary structure, monomer.

The protein resides in the cytoplasm. The catalysed reaction is AMP + ATP = 2 ADP. It participates in purine metabolism; AMP biosynthesis via salvage pathway; AMP from ADP: step 1/1. Functionally, catalyzes the reversible transfer of the terminal phosphate group between ATP and AMP. Plays an important role in cellular energy homeostasis and in adenine nucleotide metabolism. This is Adenylate kinase from Shewanella oneidensis (strain ATCC 700550 / JCM 31522 / CIP 106686 / LMG 19005 / NCIMB 14063 / MR-1).